The primary structure comprises 650 residues: Amyloid beta precursor like protein 1 (650 aa).

The N-terminal stretch at 1-38 is a signal peptide; the sequence is MGPASPAARGLSRRPGQPPLPLLLPLLLLLLRAQPAIG. At 39-580 the chain is on the extracellular side; sequence SLAGGSPGAA…APAGTGVSRE (542 aa). Residues 50–146 are GFLD subdomain; sequence APGSAQVAGL…PFRCLPGEFV (97 aa). Positions 50–212 constitute an E1 domain; that stretch reads APGSAQVAGL…RGVEYVCCPP (163 aa). Disulfide bonds link cysteine 60–cysteine 84, cysteine 95–cysteine 140, cysteine 120–cysteine 128, cysteine 156–cysteine 210, cysteine 167–cysteine 197, and cysteine 181–cysteine 209. Residues 154-212 form a cuBD subdomain region; sequence EGCRFLHQERMDQCESSTRRHQEAQEACSSQGLILHGSGMLLPCGSDRFRGVEYVCCPP. Cu(2+) is bound at residue histidine 174. Zn(2+) is bound by residues glutamate 206, cysteine 209, and cysteine 210. The segment at 214–287 is disordered; sequence GTPDPSGTAV…LAVVGKVTPT (74 aa). O-linked (GalNAc...) threonine glycosylation is present at threonine 215. O-linked (GalNAc...) serine glycosylation occurs at serine 227. Residue threonine 228 is glycosylated (O-linked (GalNAc...) threonine). The tract at residues 285 to 305 is O-glycosylated at three sites; it reads TPTPRPTDGVDIYFGMPGEIS. The E2 domain maps to 293–484; sequence GVDIYFGMPG…QELRPQIQEL (192 aa). Heparin-binding regions lie at residues 310-342 and 410-441; these read FLRAKMDLEERRMRQINEVMREWAMADNQSKNL and LLALRRYLRAEQKEQRHTLRHYQHVAAVDPEK. Asparagine 337 is a glycosylation site (N-linked (GlcNAc...) asparagine). The segment at 442–459 is collagen-binding; that stretch reads AQQMRFQVHTHLQVIEER. An N-linked (GlcNAc...) asparagine glycan is attached at asparagine 461. The segment at 492–546 is disordered; the sequence is PSELEAPAPGGSSEDKGGLQPPDSKDDTPMTLPKGSTEQDAASPEKEKMNPLEQY. Composition is skewed to basic and acidic residues over residues 504–519 and 534–546; these read SEDKGGLQPPDSKDDT and SPEKEKMNPLEQY. Asparagine 551 carries an N-linked (GlcNAc...) asparagine glycan. Histidine 561 lines the Cu(2+) pocket. Histidine 561 provides a ligand contact to Zn(2+). Residues 581–603 form a helical membrane-spanning segment; it reads AVSGLLIMGAGGGSLIVLSMLLL. The short motif at 604-615 is the Basolateral sorting signal element; sequence RRKKPYGAISHG. Residues 604-650 are Cytoplasmic-facing; the sequence is RRKKPYGAISHGVVEVDPMLTLEEQQLRELQRHGYENPTYRFLEERP. The interval 632–649 is interaction with DAB1; sequence ELQRHGYENPTYRFLEER. The interval 636 to 650 is interaction with DAB2; sequence HGYENPTYRFLEERP. The Clathrin-binding motif lies at 640 to 643; the sequence is NPTY. The short motif at 640 to 643 is the NPXY motif; contains endocytosis signal element; the sequence is NPTY.

Belongs to the APP family. In terms of assembly, monomer and homodimer. Heparin binding promotes homodimerization. Binds, via its C-terminus, to the PID domain of several cytoplasmic proteins, including APBB and APBA family members, MAPK8IP1 and DAB1. Binding to Dab1 inhibits its serine phosphorylation. Interacts with CPEB1. Interacts (via NPXY motif) with DAB2 (via PID domain); the interaction is impaired by tyrosine phosphorylation of the NPXY motif. Interacts (via NPXY motif) with DAB1. In terms of processing, proteolytically cleaved by caspases during neuronal apoptosis. Cleaved, in vitro, at Asp-620 by caspase-3. Post-translationally, N- and O-glycosylated. O-glycosylation with core 1 or possibly core 8 glycans. Glycosylation on Ser-227 is the preferred site to Thr-228. In terms of tissue distribution, expressed in the cerebral cortex where it is localized to the postsynaptic density (PSD).

The protein resides in the cell membrane. It localises to the cytoplasm. Its function is as follows. May play a role in postsynaptic function. The C-terminal gamma-secretase processed fragment, ALID1, activates transcription activation through APBB1 (Fe65) binding. Couples to JIP signal transduction through C-terminal binding. May interact with cellular G-protein signaling pathways. Can regulate neurite outgrowth through binding to components of the extracellular matrix such as heparin and collagen I. Functionally, the gamma-CTF peptide, C30, is a potent enhancer of neuronal apoptosis. This Homo sapiens (Human) protein is Amyloid beta precursor like protein 1 (APLP1).